We begin with the raw amino-acid sequence, 105 residues long: uncharacterized protein (105 aa).

The protein localises to the mitochondrion. This is an uncharacterized protein from Paramecium tetraurelia.